The primary structure comprises 407 residues: MDLDPAHKPSQAEETKEQGNEQGQVEQNQAQQDPTTGPQAETEKAIIPSQGSTIPQKRSAEDEPAQPMSKNALKRLRKQQQWEAGKEDRKLKRKDSRIARKVRKREERDALIAQGINPYANKQKPPSVNVPISLIFDCEFEQYMREKEIISLGSQITRSYSENKNAKYRTNIYVSNWNGKLAERFHQILDDKHQNWKGIDFVEGDFIECAEKAREKMKHENMIEPLQRSLTEKSPWARDEKDPLPLPDPEPEPRPEYSDIVYLSSDSPYTLERLEPNTSYVIGGLVDKNREKGLCYKRARERGIRTARLPIGQYMVMQSRTVLTTNHVVEIMLKWLEYENWGEAFMSVIPKRKGGKLKEQQGASGETQETEEAEAEDPEEENEETKDPDAEASASKQNTPKVEVTSK.

Residues 1 to 19 show a composition bias toward basic and acidic residues; sequence MDLDPAHKPSQAEETKEQG. Disordered stretches follow at residues 1–105 and 220–256; these read MDLD…VRKR and ENMI…PRPE. The span at 20-32 shows a compositional bias: low complexity; it reads NEQGQVEQNQAQQ. The segment covering 91–103 has biased composition (basic residues); the sequence is LKRKDSRIARKVR. An SAM-dependent MTase TRM10-type domain is found at 120-356; it reads ANKQKPPSVN…SVIPKRKGGK (237 aa). S-adenosyl-L-methionine is bound by residues 263 to 264, glycine 283, 287 to 291, cysteine 295, leucine 309, and 321 to 323; these read LS, DKNRE, and TVL. Aspartate 287 functions as the Proton acceptor in the catalytic mechanism. A disordered region spans residues 353 to 407; sequence KGGKLKEQQGASGETQETEEAEAEDPEEENEETKDPDAEASASKQNTPKVEVTSK. The span at 368-386 shows a compositional bias: acidic residues; that stretch reads QETEEAEAEDPEEENEETK. Residues 394–407 are compositionally biased toward polar residues; the sequence is ASKQNTPKVEVTSK.

This sequence belongs to the class IV-like SAM-binding methyltransferase superfamily. TRM10 family. In terms of assembly, monomer.

The protein resides in the cytoplasm. Its subcellular location is the nucleus. The catalysed reaction is guanosine(9) in tRNA + S-adenosyl-L-methionine = N(1)-methylguanosine(9) in tRNA + S-adenosyl-L-homocysteine + H(+). Functionally, S-adenosyl-L-methionine-dependent guanine N(1)-methyltransferase that catalyzes the formation of N(1)-methylguanine at position 9 (m1G9) in cytoplasmic tRNA. This chain is tRNA (guanine(9)-N1)-methyltransferase, found in Gibberella zeae (strain ATCC MYA-4620 / CBS 123657 / FGSC 9075 / NRRL 31084 / PH-1) (Wheat head blight fungus).